The following is a 516-amino-acid chain: MKKSLLSAVMLSSIALTAVGSPIAAAADDFDSQIQQQDKKIADLQNQQASAQSQIEALEGQVSAINTKAQDLLTKQDTLRKESAQLKQEIKDLQERIEKREATIQKQARETQVKNTSSNYIDAVLNADSLADAVGRIQAMSTIVKANQDLVQQQKEDKQAVEAKKAENEAKQKELADNQAALESQKGDLLAKQADLNVLKTSLAAEQATAEDKKADLNRKKAEAEAEQARIREQARLAEQARQQAAQEKAEKEAREQAAAQAAQTQALSSASTTTESSSAAQSSSEESKAPESSTTEESTSTESSTTTENSSTGSSSTESSSTEESTVPESSTQESTPANTESSSSSSNTNVNNNTNNSTNNSTNNSTTNNNNNNNTVTPAPTPTPTPAPAPAPNPSGSVNGAAIVAEAYKYIGTPYVWGGKDPSGFDCSGFTRYVYLQVTGRDIGGWTVPQESAGTKISVSQAKAGDLLFWGSAGGTYHVAISLGGGQYIHAPQPGENVKVGSVQWYTPDFAVSM.

An N-terminal signal peptide occupies residues 1–27; the sequence is MKKSLLSAVMLSSIALTAVGSPIAAAA. The segment at 208-397 is disordered; it reads ATAEDKKADL…PAPAPAPNPS (190 aa). The segment covering 210–236 has biased composition (basic and acidic residues); sequence AEDKKADLNRKKAEAEAEQARIREQAR. Composition is skewed to low complexity over residues 237–247 and 257–380; these read LAEQARQQAAQ and QAAA…TVTP. Residues 381–395 are compositionally biased toward pro residues; sequence APTPTPTPAPAPAPN. One can recognise a NlpC/P60 domain in the interval 399-516; it reads SVNGAAIVAE…WYTPDFAVSM (118 aa). Cys429 functions as the Nucleophile in the catalytic mechanism. His480 functions as the Proton acceptor in the catalytic mechanism. Residue His492 is part of the active site.

Belongs to the peptidase C40 family.

The protein resides in the secreted. It is found in the cell wall. The chain is Protein P54 from Enterococcus faecium (Streptococcus faecium).